The following is a 209-amino-acid chain: Inner membrane protein YjdF (209 aa).

The Periplasmic portion of the chain corresponds to 1–7 (MTRTLKP). The helical transmembrane segment at 8-28 (LILNTSALTLTLILIYTGISA) threads the bilayer. Residues 29 to 31 (HDK) lie on the Cytoplasmic side of the membrane. Residues 32 to 52 (LTWLMEVTPVIIVVQLLLATA) traverse the membrane as a helical segment. Residues 53–55 (RRY) lie on the Periplasmic side of the membrane. A helical membrane pass occupies residues 56 to 76 (PLTPLLYTLIFLHAIILMVGG). The Cytoplasmic segment spans residues 77 to 131 (QYTYAKVPVGFEVQEWLGLSRNPYDKLGHFFQGLVPALVAREILVRGMYVRGRKM). A helical membrane pass occupies residues 132–152 (VAFLVCCVALAISAMYELIEW). Over 153–177 (WAALAMGQGADDFLGTQGDQWDTQS) the chain is Periplasmic. A helical membrane pass occupies residues 178–198 (DMFCALLGALTTVIFLARFHC). Residues 199-209 (RQLRRFGLITG) are Cytoplasmic-facing.

It localises to the cell inner membrane. In Escherichia coli (strain K12), this protein is Inner membrane protein YjdF (yjdF).